The following is a 346-amino-acid chain: Uroporphyrinogen decarboxylase (346 aa).

Substrate-binding positions include 26–30 (RQAGR), aspartate 76, tyrosine 153, serine 208, and histidine 323.

This sequence belongs to the uroporphyrinogen decarboxylase family. Homodimer.

Its subcellular location is the cytoplasm. It carries out the reaction uroporphyrinogen III + 4 H(+) = coproporphyrinogen III + 4 CO2. Its pathway is porphyrin-containing compound metabolism; protoporphyrin-IX biosynthesis; coproporphyrinogen-III from 5-aminolevulinate: step 4/4. Catalyzes the decarboxylation of four acetate groups of uroporphyrinogen-III to yield coproporphyrinogen-III. The polypeptide is Uroporphyrinogen decarboxylase (Prochlorococcus marinus (strain MIT 9515)).